Here is a 591-residue protein sequence, read N- to C-terminus: Aspartate--tRNA(Asp/Asn) ligase (591 aa).

E176 contacts L-aspartate. The aspartate stretch occupies residues Q200–K203. R222 contacts L-aspartate. Residues R222 to E224 and Q231 contribute to the ATP site. H450 contacts L-aspartate. An ATP-binding site is contributed by E484. An L-aspartate-binding site is contributed by R491. G536–R539 provides a ligand contact to ATP.

This sequence belongs to the class-II aminoacyl-tRNA synthetase family. Type 1 subfamily. In terms of assembly, homodimer.

The protein localises to the cytoplasm. The catalysed reaction is tRNA(Asx) + L-aspartate + ATP = L-aspartyl-tRNA(Asx) + AMP + diphosphate. Aspartyl-tRNA synthetase with relaxed tRNA specificity since it is able to aspartylate not only its cognate tRNA(Asp) but also tRNA(Asn). Reaction proceeds in two steps: L-aspartate is first activated by ATP to form Asp-AMP and then transferred to the acceptor end of tRNA(Asp/Asn). This is Aspartate--tRNA(Asp/Asn) ligase from Bacillus anthracis (strain CDC 684 / NRRL 3495).